Here is a 418-residue protein sequence, read N- to C-terminus: Protein-lysine N-trimethyltransferase SMYD5 (418 aa).

The 332-residue stretch at 21 to 352 (VSVEVRFVSS…PGEEICISYL (332 aa)) folds into the SET domain. Residues 98 to 136 (PELCTVRKDLHQNCPHCQVMYCSAECRLAATEQYHQVLC) form an MYND-type zinc finger. An S-adenosyl-L-methionine-binding site is contributed by tyrosine 351. The segment at 385–418 (ADEPNVTSEEEEEEEEEEEGEPEDAELGDEMTDV) is disordered.

It belongs to the class V-like SAM-binding methyltransferase superfamily. Interacts with the N-CoR complex. Interacts with EHMT2 and CBX5. In terms of processing, ubiquitinated and degradaed by the proteasome in response to mild hypothermia (32 degrees Celsius), relieving repression of the SP1 gene.

The protein resides in the cytoplasm. It carries out the reaction L-lysyl-[protein] + 3 S-adenosyl-L-methionine = N(6),N(6),N(6)-trimethyl-L-lysyl-[protein] + 3 S-adenosyl-L-homocysteine + 3 H(+). It catalyses the reaction L-lysyl(20)-[histone H4] + 3 S-adenosyl-L-methionine = N(6),N(6),N(6)-trimethyl-L-lysyl(20)-[histone H4] + 3 S-adenosyl-L-homocysteine + 3 H(+). The catalysed reaction is L-lysyl(36)-[histone H3] + 3 S-adenosyl-L-methionine = N(6),N(6),N(6)-trimethyl-L-lysyl(36)-[histone H3] + 3 S-adenosyl-L-homocysteine + 3 H(+). In terms of biological role, protein-lysine N-trimethyltransferase that specifically catalyzes trimethylation of 'Lys-22' of the RPL40/eL40 subunit of the 60S ribosome, thereby promoting translation elongation and protein synthesis. May also act as a histone methyltransferase in the context of histone octamers, but not on nucleosome substrates: trimethylates 'Lys-36' of histone H3 and 'Lys-20' of histone H4 to form H3K36me3 and H4K20me3, respectively. The histone methyltransferase activity, which is independent of its SET domain, is however unsure in vivo. In association with the NCoR corepressor complex, involved in the repression of toll-like receptor 4 (TLR4)-target inflammatory genes in macrophages, possibly by catalyzing the formation of H4K20me3 at the gene promoters. Plays an important role in embryonic stem (ES) cell self-renewal and differentiation. Maintains genome stability of ES cells during differentiation through regulation of heterochromatin formation and repression of endogenous repetitive DNA elements by promoting H4K20me3 marks. Acts as a regulator of the hypothermia response: its degradation in response to mild hypothermia relieves the formation of H3K36me3 at gene promoters, allowing expression of the neuroprotective gene SP1. The protein is Protein-lysine N-trimethyltransferase SMYD5 of Homo sapiens (Human).